A 481-amino-acid polypeptide reads, in one-letter code: Beta-amyrin 28-monooxygenase (481 aa).

The chain crosses the membrane as a helical span at residues 4-24 (FYVPLLSLFVLFISLSFHFLF). Cys-428 contacts heme.

It belongs to the cytochrome P450 family. Requires heme as cofactor. In terms of tissue distribution, mostly expressed in roots, and, to a lower extent, in stems and leaves. Accumulates only in the rhizome of plants.

The protein resides in the membrane. The catalysed reaction is beta-amyrin + 3 reduced [NADPH--hemoprotein reductase] + 3 O2 = oleanolate + 3 oxidized [NADPH--hemoprotein reductase] + 4 H2O + 4 H(+). It participates in secondary metabolite biosynthesis; terpenoid biosynthesis. Functionally, component of the oleanane-type triterpene saponins (e.g. ginsenosides or panaxosides) biosynthetic pathway. Catalyzes the carboxylation of beta-amyrin at the C-28 position to form oleanolic acid during ginsenoside biosynthesis, a class of tetracyclic triterpenoid saponins. This chain is Beta-amyrin 28-monooxygenase, found in Panax ginseng (Korean ginseng).